The sequence spans 210 residues: MDKQQLETTVTKVLDEMRERPIPLGISNRHIHLCAEDYDRLFPNHPISEKKELLQPGQYAADQTVTLVGPKGQLKNVRLLGPLRSTSQVEISRTDARTLGIAAPLRMSGSIEGTPGVRLISPFAELDLASGVIVAQRHIHMSPLDALILRVSHGDKVSVAINGDERRLIFDNVAVRVSPDMRLEMHIDTDEANAAGADNPQAFATLVSPR.

Residue 26–28 (ISN) participates in CoA binding. Residues histidine 30 and histidine 32 each contribute to the Zn(2+) site. Lysine 71 and arginine 78 together coordinate CoA. Position 84 (arginine 84) interacts with phosphate. 4 residues coordinate Zn(2+): glutamate 90, histidine 138, histidine 140, and histidine 186. Asparagine 193 provides a ligand contact to CoA.

This sequence belongs to the PduL family. Requires Zn(2+) as cofactor.

Its subcellular location is the bacterial microcompartment. The catalysed reaction is propanoyl-CoA + phosphate = propanoyl phosphate + CoA. It participates in polyol metabolism; 1,2-propanediol degradation. Its function is as follows. Involved in 1,2-propanediol (1,2-PD) utilization within the bacterial microcompartment (BMC) dedicated to 1,2-PD degradation by catalyzing the conversion of propanoyl-CoA to propanoyl-phosphate. Required for optimal growth on 1,2-PD. CoA is regenerated within the BMC (for use by PduP) via this enzyme, although there must also be cofactor transport across the BMC. Directly targeted to the BMC. In terms of biological role, expression of a cosmid containing the full 21-gene pdu operon in E.coli allows E.coli to grow on 1,2-propanediol (1,2-PD) with the appearance of bacterial microcompartments (BMC) in its cytoplasm. Functionally, the 1,2-PD-specific bacterial microcompartment (BMC) concentrates low levels of 1,2-PD catabolic enzymes, concentrates volatile reaction intermediates thus enhancing pathway flux and keeps the level of toxic, mutagenic propionaldehyde low. In Citrobacter freundii, this protein is Phosphate propanoyltransferase.